A 330-amino-acid chain; its full sequence is Flotillin-like protein FloA (330 aa).

2 consecutive transmembrane segments (helical) span residues 6–26 (LFLL…FTFV) and 28–48 (VMLW…TLIG).

This sequence belongs to the flotillin-like FloA family. In terms of assembly, homooligomerizes.

It is found in the cell membrane. The protein localises to the membrane raft. Its function is as follows. Found in functional membrane microdomains (FMM) that may be equivalent to eukaryotic membrane rafts. FMMs are highly dynamic and increase in number as cells age. Flotillins are thought to be important factors in membrane fluidity. The sequence is that of Flotillin-like protein FloA from Bacillus licheniformis (strain ATCC 14580 / DSM 13 / JCM 2505 / CCUG 7422 / NBRC 12200 / NCIMB 9375 / NCTC 10341 / NRRL NRS-1264 / Gibson 46).